We begin with the raw amino-acid sequence, 498 residues long: Ammonium transporter 1 member 3 (498 aa).

Helical transmembrane passes span 41–61 (LLFS…LCAG), 76–96 (VLDA…FAFG), 122–142 (FFLF…GSIA), 150–170 (YLIY…HWFW), 194–214 (FAGS…GAFI), 238–258 (LVVL…PGSF), 277–299 (AVGR…TLYG), 307–327 (WNVT…TAGC), 329–349 (VVDP…LIGC), 362–382 (LEAT…TALF), and 414–434 (IVQI…LFYV). The disordered stretch occupies residues 473–498 (RAKSAAETARVEPRKSPEQAAAGQFV).

The protein belongs to the ammonia transporter channel (TC 1.A.11.2) family. In terms of tissue distribution, expressed in roots.

The protein resides in the membrane. Its function is as follows. Ammonium transporter probably involved in ammonium uptake from the soil. This Oryza sativa subsp. japonica (Rice) protein is Ammonium transporter 1 member 3 (AMT1-3).